Consider the following 233-residue polypeptide: Purine nucleoside phosphorylase DeoD-type (233 aa).

An a purine D-ribonucleoside-binding site is contributed by His-4. Phosphate contacts are provided by residues Gly-20, Arg-24, Arg-43, and 87 to 90 (RIGT). Residues 179-181 (EME) and 203-204 (SD) contribute to the a purine D-ribonucleoside site. The active-site Proton donor is Asp-204.

Belongs to the PNP/UDP phosphorylase family. In terms of assembly, homohexamer; trimer of homodimers.

It catalyses the reaction a purine D-ribonucleoside + phosphate = a purine nucleobase + alpha-D-ribose 1-phosphate. The catalysed reaction is a purine 2'-deoxy-D-ribonucleoside + phosphate = a purine nucleobase + 2-deoxy-alpha-D-ribose 1-phosphate. Functionally, catalyzes the reversible phosphorolytic breakdown of the N-glycosidic bond in the beta-(deoxy)ribonucleoside molecules, with the formation of the corresponding free purine bases and pentose-1-phosphate. This Helicobacter pylori (strain J99 / ATCC 700824) (Campylobacter pylori J99) protein is Purine nucleoside phosphorylase DeoD-type.